The chain runs to 160 residues: Regulatory protein RecX (160 aa).

The protein belongs to the RecX family.

The protein resides in the cytoplasm. In terms of biological role, modulates RecA activity. In Pelodictyon phaeoclathratiforme (strain DSM 5477 / BU-1), this protein is Regulatory protein RecX.